The following is a 436-amino-acid chain: tRNA(Ile)-lysidine synthase (436 aa).

27 to 32 is an ATP binding site; sequence SGGVDS.

The protein belongs to the tRNA(Ile)-lysidine synthase family.

Its subcellular location is the cytoplasm. The enzyme catalyses cytidine(34) in tRNA(Ile2) + L-lysine + ATP = lysidine(34) in tRNA(Ile2) + AMP + diphosphate + H(+). Its function is as follows. Ligates lysine onto the cytidine present at position 34 of the AUA codon-specific tRNA(Ile) that contains the anticodon CAU, in an ATP-dependent manner. Cytidine is converted to lysidine, thus changing the amino acid specificity of the tRNA from methionine to isoleucine. This chain is tRNA(Ile)-lysidine synthase, found in Vibrio vulnificus (strain YJ016).